A 388-amino-acid chain; its full sequence is L-lactate dehydrogenase (388 aa).

Residues 1 to 380 (MIISSSSDYR…SRDSLVREIE (380 aa)) form the FMN hydroxy acid dehydrogenase domain. Tyr24 serves as a coordination point for substrate. FMN contacts are provided by Ser106 and Gln127. Tyr129 lines the substrate pocket. Thr155 provides a ligand contact to FMN. A substrate-binding site is contributed by Arg164. Lys251 serves as a coordination point for FMN. His275 functions as the Proton acceptor in the catalytic mechanism. Arg278 lines the substrate pocket. An FMN-binding site is contributed by 306-330 (DSGIRSGLDVVRMLAQGADGVLLGR).

It belongs to the FMN-dependent alpha-hydroxy acid dehydrogenase family. It depends on FMN as a cofactor.

It is found in the cell inner membrane. It catalyses the reaction (S)-lactate + A = pyruvate + AH2. In terms of biological role, catalyzes the conversion of L-lactate to pyruvate. Is coupled to the respiratory chain. This chain is L-lactate dehydrogenase, found in Xanthobacter autotrophicus (strain ATCC BAA-1158 / Py2).